The chain runs to 555 residues: 3-oxocholest-4-en-26-oate--CoA ligase (555 aa).

Residues Thr-172 to Lys-180, Asp-418, Arg-433, and Lys-524 contribute to the ATP site. Residues Pro-525 to Gly-555 form a disordered region. Low complexity predominate over residues Asn-544–Gly-555.

It belongs to the ATP-dependent AMP-binding enzyme family.

The catalysed reaction is (25S)-3-oxocholest-4-en-26-oate + ATP + CoA = (25S)-3-oxocholest-4-en-26-oyl-CoA + AMP + diphosphate. Its pathway is steroid metabolism; cholesterol metabolism. Its function is as follows. Involved in the degradation of the side chains of C-24 branched-chain sterols. Catalyzes the ATP-dependent CoA thioesterification of the sterol 3-oxocholest-4-en-26-oate to yield 3-oxocholest-4-en-26-oyl-CoA. It can also use beta-sitosterol, campesterol and 3beta-hydroxy-5-cholesten-26-oate. The chain is 3-oxocholest-4-en-26-oate--CoA ligase from Rhodococcus rhodochrous.